The chain runs to 324 residues: Phospho-N-acetylmuramoyl-pentapeptide-transferase (324 aa).

10 helical membrane passes run 5-25 (VILF…PIFI), 52-72 (PTMG…VMTM), 77-97 (VSMN…LGFL), 117-137 (LIGQ…QGMP), 147-167 (LSFD…VGGS), 176-196 (LDGL…ILAW), 203-223 (VAIF…FNAH), 227-247 (VFMG…IAIL), 250-270 (LEIL…SVIL), and 302-322 (VVVT…YIEV).

Belongs to the glycosyltransferase 4 family. MraY subfamily. Mg(2+) is required as a cofactor.

It is found in the cell membrane. The catalysed reaction is UDP-N-acetyl-alpha-D-muramoyl-L-alanyl-gamma-D-glutamyl-meso-2,6-diaminopimeloyl-D-alanyl-D-alanine + di-trans,octa-cis-undecaprenyl phosphate = di-trans,octa-cis-undecaprenyl diphospho-N-acetyl-alpha-D-muramoyl-L-alanyl-D-glutamyl-meso-2,6-diaminopimeloyl-D-alanyl-D-alanine + UMP. Its pathway is cell wall biogenesis; peptidoglycan biosynthesis. Catalyzes the initial step of the lipid cycle reactions in the biosynthesis of the cell wall peptidoglycan: transfers peptidoglycan precursor phospho-MurNAc-pentapeptide from UDP-MurNAc-pentapeptide onto the lipid carrier undecaprenyl phosphate, yielding undecaprenyl-pyrophosphoryl-MurNAc-pentapeptide, known as lipid I. In Bacillus licheniformis (strain ATCC 14580 / DSM 13 / JCM 2505 / CCUG 7422 / NBRC 12200 / NCIMB 9375 / NCTC 10341 / NRRL NRS-1264 / Gibson 46), this protein is Phospho-N-acetylmuramoyl-pentapeptide-transferase.